A 270-amino-acid polypeptide reads, in one-letter code: Putative phosphoenolpyruvate synthase regulatory protein (270 aa).

Position 150–157 (150–157 (GVSRCGKT)) interacts with ADP.

The protein belongs to the pyruvate, phosphate/water dikinase regulatory protein family. PSRP subfamily.

It carries out the reaction [pyruvate, water dikinase] + ADP = [pyruvate, water dikinase]-phosphate + AMP + H(+). The enzyme catalyses [pyruvate, water dikinase]-phosphate + phosphate + H(+) = [pyruvate, water dikinase] + diphosphate. In terms of biological role, bifunctional serine/threonine kinase and phosphorylase involved in the regulation of the phosphoenolpyruvate synthase (PEPS) by catalyzing its phosphorylation/dephosphorylation. The sequence is that of Putative phosphoenolpyruvate synthase regulatory protein from Shewanella loihica (strain ATCC BAA-1088 / PV-4).